The following is a 196-amino-acid chain: RNA polymerase II subunit B1 CTD phosphatase RTR2 (196 aa).

The RTR1-type zinc-finger motif lies at 52–123 (YLARLLSPMS…LSQTPLHERR (72 aa)). Cysteine 75, cysteine 80, cysteine 99, and histidine 103 together coordinate Zn(2+).

The protein belongs to the RPAP2 family.

The protein localises to the cytoplasm. It localises to the nucleus. The catalysed reaction is O-phospho-L-seryl-[protein] + H2O = L-seryl-[protein] + phosphate. It catalyses the reaction O-phospho-L-threonyl-[protein] + H2O = L-threonyl-[protein] + phosphate. Its function is as follows. Probable RNA polymerase II subunit B1 C-terminal domain (CTD) phosphatase that regulates RNA polymerase II transcription. May have functional redundancy with RTR1. This is RNA polymerase II subunit B1 CTD phosphatase RTR2 (RTR2) from Saccharomyces cerevisiae (strain ATCC 204508 / S288c) (Baker's yeast).